Here is a 302-residue protein sequence, read N- to C-terminus: MAEVLNLESIISRLLEVRGARPGKNVQLSEGEIRGLCLKSREILLAQPILLELEAPLKICGDIHGQYYDLLRLFEYGGYPPEANYLFLGDYVDRGKQSLETICLLLAYKIKYSENFFLLRGNHECASINRIYGFYDECKRRYTIKLWKTFTDCFNCLPVVAIVDEKIFCCHGGLSPDLTSMEQIRRIMRPTDVPDQGLLCDLLWSDPDKDTIGWGENDRGVSFTFGAEVVVKFLQKHDLDLICRAHQVVEDGYEFFAKRQLVTLFSAPNYCGEFDNAGAMMSVDNTLMCSFQILKPVEKRKK.

Mn(2+) contacts are provided by Asp-62, His-64, Asp-90, and Asn-122. Residue His-123 is the Proton donor of the active site. 2 residues coordinate Mn(2+): His-171 and His-246.

It belongs to the PPP phosphatase family. PP-1 subfamily. In terms of assembly, interacts with Nop17l. Mn(2+) serves as cofactor.

It carries out the reaction O-phospho-L-seryl-[protein] + H2O = L-seryl-[protein] + phosphate. The catalysed reaction is O-phospho-L-threonyl-[protein] + H2O = L-threonyl-[protein] + phosphate. The protein is Serine/threonine-protein phosphatase alpha-3 isoform (Pp1-13C) of Drosophila melanogaster (Fruit fly).